A 177-amino-acid chain; its full sequence is Large ribosomal subunit protein uL6 (177 aa).

Belongs to the universal ribosomal protein uL6 family. In terms of assembly, part of the 50S ribosomal subunit.

In terms of biological role, this protein binds to the 23S rRNA, and is important in its secondary structure. It is located near the subunit interface in the base of the L7/L12 stalk, and near the tRNA binding site of the peptidyltransferase center. The sequence is that of Large ribosomal subunit protein uL6 from Cronobacter sakazakii (strain ATCC BAA-894) (Enterobacter sakazakii).